A 391-amino-acid chain; its full sequence is Inhibin beta B chain (391 aa).

The signal sequence occupies residues 1-25 (MDGAARRGVLAALLACGLLLLGAAA). The propeptide occupies 26–276 (TPTPPPAGSS…ADNKHRIRKR (251 aa)). The segment at 27–47 (PTPPPAGSSPQDTCTSCGFRR) is disordered. A glycan (N-linked (GlcNAc...) asparagine) is linked at asparagine 77. 4 cysteine pairs are disulfide-bonded: cysteine 280–cysteine 288, cysteine 287–cysteine 356, cysteine 316–cysteine 388, and cysteine 320–cysteine 390.

The protein belongs to the TGF-beta family. In terms of assembly, dimeric, linked by one or more disulfide bonds. Inhibin A is a dimer of alpha and beta-A. Inhibin B is a dimer of alpha and beta-B. Activin A is a homodimer of beta-A. Activin B is a homodimer of beta-B. Activin AB is a dimer of beta-A and beta-B.

Its subcellular location is the secreted. Inhibins and activins inhibit and activate, respectively, the secretion of follitropin by the pituitary gland. Inhibins/activins are involved in regulating a number of diverse functions such as hypothalamic and pituitary hormone secretion, gonadal hormone secretion, germ cell development and maturation, erythroid differentiation, insulin secretion, nerve cell survival, embryonic axial development or bone growth, depending on their subunit composition. Inhibins appear to oppose the functions of activins. The sequence is that of Inhibin beta B chain (INHBB) from Gallus gallus (Chicken).